The primary structure comprises 302 residues: Phosphoribosylaminoimidazole-succinocarboxamide synthase (302 aa).

This sequence belongs to the SAICAR synthetase family.

The enzyme catalyses 5-amino-1-(5-phospho-D-ribosyl)imidazole-4-carboxylate + L-aspartate + ATP = (2S)-2-[5-amino-1-(5-phospho-beta-D-ribosyl)imidazole-4-carboxamido]succinate + ADP + phosphate + 2 H(+). It functions in the pathway purine metabolism; IMP biosynthesis via de novo pathway; 5-amino-1-(5-phospho-D-ribosyl)imidazole-4-carboxamide from 5-amino-1-(5-phospho-D-ribosyl)imidazole-4-carboxylate: step 1/2. The sequence is that of Phosphoribosylaminoimidazole-succinocarboxamide synthase from Ralstonia nicotianae (strain ATCC BAA-1114 / GMI1000) (Ralstonia solanacearum).